An 85-amino-acid polypeptide reads, in one-letter code: Small ribosomal subunit protein uS17 (85 aa).

This sequence belongs to the universal ribosomal protein uS17 family. Part of the 30S ribosomal subunit.

Functionally, one of the primary rRNA binding proteins, it binds specifically to the 5'-end of 16S ribosomal RNA. This Pseudoalteromonas translucida (strain TAC 125) protein is Small ribosomal subunit protein uS17.